The primary structure comprises 147 residues: Hemoglobin subunit epsilon (147 aa).

Residues 3–147 (HLTAEEKSSV…VATALAHKYH (145 aa)) enclose the Globin domain. Residues Ser14 and Ser51 each carry the phosphoserine modification. Heme b-binding residues include His64 and His93.

It belongs to the globin family. Heterotetramer of two alpha chains and two epsilon chains in early embryonic hemoglobin Gower-2; two zeta chains and two epsilon chains in early embryonic hemoglobin Gower-1. Red blood cells.

Functionally, the epsilon chain is a beta-type chain of early mammalian embryonic hemoglobin. The sequence is that of Hemoglobin subunit epsilon (HBE1) from Carlito syrichta (Philippine tarsier).